The primary structure comprises 174 residues: Disulfide bond formation protein B (174 aa).

At 1–12 (MLNWIDTAPRRI) the chain is on the cytoplasmic side. A helical transmembrane segment spans residues 13 to 29 (LALISAACVAMLAFGMY). At 30-47 (LQHVVGLEPCPMCIVQRY) the chain is on the periplasmic side. Residues C39 and C42 are joined by a disulfide bond. Residues 48–64 (ALIGVAVFAGLASARGQ) form a helical membrane-spanning segment. Residues 65–69 (KGWWM) lie on the Cytoplasmic side of the membrane. Residues 70–87 (TWSVLALVAAGFGAFVAA) traverse the membrane as a helical segment. Topologically, residues 88–143 (RQSWLQWYPPEIATCGRDFYGMIENYPISRAIPMIFRGSGDCTAVDWTFLGGSIAN) are periplasmic. A disulfide bridge links C102 with C129. A helical membrane pass occupies residues 144-162 (WSFVWFLLFAVLLLVLLVR). The Cytoplasmic segment spans residues 163-174 (GGRGAPDTLARA).

Belongs to the DsbB family.

It localises to the cell inner membrane. Its function is as follows. Required for disulfide bond formation in some periplasmic proteins. Acts by oxidizing the DsbA protein. The protein is Disulfide bond formation protein B of Acidovorax sp. (strain JS42).